We begin with the raw amino-acid sequence, 972 residues long: Leucine--tRNA ligase (972 aa).

A 'HIGH' region motif is present at residues 78 to 89 (PYPSGDGLHVGH). A 'KMSKS' region motif is present at residues 741–745 (KIGKS). Residue K744 coordinates ATP.

The protein belongs to the class-I aminoacyl-tRNA synthetase family.

The protein localises to the cytoplasm. The enzyme catalyses tRNA(Leu) + L-leucine + ATP = L-leucyl-tRNA(Leu) + AMP + diphosphate. The chain is Leucine--tRNA ligase from Mycobacterium leprae (strain Br4923).